A 120-amino-acid polypeptide reads, in one-letter code: Large ribosomal subunit protein uL18 (120 aa).

The protein belongs to the universal ribosomal protein uL18 family. In terms of assembly, part of the 50S ribosomal subunit; part of the 5S rRNA/L5/L18/L25 subcomplex. Contacts the 5S and 23S rRNAs.

Its function is as follows. This is one of the proteins that bind and probably mediate the attachment of the 5S RNA into the large ribosomal subunit, where it forms part of the central protuberance. This Geobacillus sp. (strain WCH70) protein is Large ribosomal subunit protein uL18.